Reading from the N-terminus, the 156-residue chain is UPF0523 protein C (156 aa).

It belongs to the UPF0523 family.

This chain is UPF0523 protein C, found in Dictyostelium discoideum (Social amoeba).